Reading from the N-terminus, the 282-residue chain is Elongation factor Ts (282 aa).

Residues 79–82 are involved in Mg(2+) ion dislocation from EF-Tu; the sequence is TDFV.

The protein belongs to the EF-Ts family.

It is found in the cytoplasm. Associates with the EF-Tu.GDP complex and induces the exchange of GDP to GTP. It remains bound to the aminoacyl-tRNA.EF-Tu.GTP complex up to the GTP hydrolysis stage on the ribosome. The chain is Elongation factor Ts from Colwellia psychrerythraea (strain 34H / ATCC BAA-681) (Vibrio psychroerythus).